We begin with the raw amino-acid sequence, 185 residues long: MGPERHLSGAPARMATVVLGGDTMGPERIFPNQTEELGHQGPSEGTGDWSSEEPEEEQEETGSGPAGYSYQPLNQDPEQEEVELAPVGDGDVVADIQDRIQALGLHLPDPPLESEDEDEEGATALNNHSSIPMDPEHVELVKRTMAGVSLPAPGVPAWAREISDAQWEDVVQKALQARQASPAWK.

Disordered stretches follow at residues 1-90 (MGPE…VGDG) and 104-134 (GLHL…IPMD). Acidic residues-rich tracts occupy residues 50 to 60 (SSEEPEEEQEE) and 112 to 121 (LESEDEDEEG). Serine 114 bears the Phosphoserine mark.

As to expression, highly expressed in testis.

In terms of biological role, may play an important role in spermatogenesis and/or testis development. The chain is Male-enhanced antigen 1 (MEA1) from Homo sapiens (Human).